The chain runs to 283 residues: tRNA-cytidine(32) 2-sulfurtransferase (283 aa).

Residues 49–54 (SGGKDS) carry the PP-loop motif motif. C124, C127, and C215 together coordinate [4Fe-4S] cluster.

It belongs to the TtcA family. Homodimer. Mg(2+) is required as a cofactor. The cofactor is [4Fe-4S] cluster.

It is found in the cytoplasm. It carries out the reaction cytidine(32) in tRNA + S-sulfanyl-L-cysteinyl-[cysteine desulfurase] + AH2 + ATP = 2-thiocytidine(32) in tRNA + L-cysteinyl-[cysteine desulfurase] + A + AMP + diphosphate + H(+). Its pathway is tRNA modification. Catalyzes the ATP-dependent 2-thiolation of cytidine in position 32 of tRNA, to form 2-thiocytidine (s(2)C32). The sulfur atoms are provided by the cysteine/cysteine desulfurase (IscS) system. This chain is tRNA-cytidine(32) 2-sulfurtransferase, found in Acaryochloris marina (strain MBIC 11017).